Consider the following 276-residue polypeptide: Large ribosomal subunit protein uL2 (276 aa).

The tract at residues 219 to 276 is disordered; the sequence is TVRGSVMNPNDHPHGGGEGRSPIGRPSPVTPWGKPALGYKTRKKNKASNKLIVSRRTK. Positions 258 to 276 are enriched in basic residues; sequence KTRKKNKASNKLIVSRRTK.

It belongs to the universal ribosomal protein uL2 family. Part of the 50S ribosomal subunit. Forms a bridge to the 30S subunit in the 70S ribosome.

Its function is as follows. One of the primary rRNA binding proteins. Required for association of the 30S and 50S subunits to form the 70S ribosome, for tRNA binding and peptide bond formation. It has been suggested to have peptidyltransferase activity; this is somewhat controversial. Makes several contacts with the 16S rRNA in the 70S ribosome. The sequence is that of Large ribosomal subunit protein uL2 from Clostridioides difficile (strain 630) (Peptoclostridium difficile).